Consider the following 298-residue polypeptide: Ethanolamine ammonia-lyase small subunit (298 aa).

The interval 1–19 is targets protein to the BMC; that stretch reads MDQKQIEEIVRSVMASMGQ. Residues valine 210, glutamate 231, and cysteine 261 each contribute to the adenosylcob(III)alamin site.

The protein belongs to the EutC family. In terms of assembly, the basic unit is a heterodimer which dimerizes to form tetramers. The heterotetramers trimerize; 6 large subunits form a core ring with 6 small subunits projecting outwards. Interacts with EutS, which targets it to the interior of the BMC. Adenosylcob(III)alamin is required as a cofactor.

The protein localises to the bacterial microcompartment. It catalyses the reaction ethanolamine = acetaldehyde + NH4(+). It participates in amine and polyamine degradation; ethanolamine degradation. Catalyzes the deamination of various vicinal amino-alcohols to oxo compounds. It is spontaneously inactivated by its substrate and reactivated by EutA. May play a role in bacterial microcompartment (BMC) assembly or maintenance. Directly targeted to the BMC. In terms of biological role, expression of the eut operon allows this bacteria to use ethanolamine (EA) as a carbon, nitrogen and energy source. It relies on cobalamin (vitamin B12) both as a cofactor for the ethanolamine ammonia-lyase activity and to induce the operon. EA enhances bacterial survival in macrophages in a concentration-dependent manner, suggesting it is an important nutrient during infection. This Salmonella typhimurium (strain LT2 / SGSC1412 / ATCC 700720) protein is Ethanolamine ammonia-lyase small subunit.